We begin with the raw amino-acid sequence, 418 residues long: MDKLSIQSGGPLAGTVVISGAKNAALPILMAGVLAESPFVLTNVPSLRDVDTSCKLLRCLGAEVTQDGDRITIDSSRIDHFVAPYELVKTMRASILILGPLLARFGTADVSLPGGCAIGARPVNLHLHGLEQMGAKIEVKEGYIKARVDGRLKGAHIFMDMVSVGATENLLMAAALADGVTVIENAAREPEVIDLANCLVAMGAQISGIGTATLKITGVERLNGCDYRVMPDRIETGTFLVAAAVTRGRIRCENADPSSLESVLAKLEDAGAEINTGDDWIELDMHGKRPKAVNIKTAPYPAFPTDMQAQFCVLNCLAEGTGTITETIFENRFMHVPELMRMGANMELEGHTCIVHGVERLSGAQVMATDLRASASLVIAGLMADGTTLVDRIYHLDRGYEHIETKFEGLGGKVVRVK.

Phosphoenolpyruvate is bound at residue 22–23; that stretch reads KN. Arginine 92 contributes to the UDP-N-acetyl-alpha-D-glucosamine binding site. The Proton donor role is filled by cysteine 116. Cysteine 116 carries the post-translational modification 2-(S-cysteinyl)pyruvic acid O-phosphothioketal. Positions 306 and 328 each coordinate UDP-N-acetyl-alpha-D-glucosamine.

Belongs to the EPSP synthase family. MurA subfamily.

The protein resides in the cytoplasm. The catalysed reaction is phosphoenolpyruvate + UDP-N-acetyl-alpha-D-glucosamine = UDP-N-acetyl-3-O-(1-carboxyvinyl)-alpha-D-glucosamine + phosphate. It functions in the pathway cell wall biogenesis; peptidoglycan biosynthesis. In terms of biological role, cell wall formation. Adds enolpyruvyl to UDP-N-acetylglucosamine. The polypeptide is UDP-N-acetylglucosamine 1-carboxyvinyltransferase (Shewanella amazonensis (strain ATCC BAA-1098 / SB2B)).